A 150-amino-acid polypeptide reads, in one-letter code: Thyroid hormone-inducible hepatic protein (150 aa).

Residues 83–105 (KVAGNEGSEAENEAAETEEAEED) are disordered. Phosphoserine is present on serine 90. A compositionally biased stretch (acidic residues) spans 90–105 (SEAENEAAETEEAEED).

Belongs to the SPOT14 family. In terms of assembly, homodimer. Heterodimer with MID1IP1. Interacts with THRB and PLAGL1. As to expression, highly expressed in liver, lactating mammary gland, epididymal, retroperitoneal and brown fat. Mainly expressed in tissues that synthesize triglycerides.

The protein resides in the nucleus. Its subcellular location is the cytoplasm. Plays a role in the regulation of lipogenesis, especially in lactating mammary gland. Important for the biosynthesis of triglycerides with medium-length fatty acid chains. May modulate lipogenesis by interacting with MID1IP1 and preventing its interaction with ACACA. May function as transcriptional coactivator. May modulate the transcription factor activity of THRB. This Rattus norvegicus (Rat) protein is Thyroid hormone-inducible hepatic protein (Thrsp).